Here is a 250-residue protein sequence, read N- to C-terminus: DNA polymerase sliding clamp (250 aa).

This sequence belongs to the PCNA family. Homotrimer. The subunits circularize to form a toroid; DNA passes through its center. Replication factor C (RFC) is required to load the toroid on the DNA.

Its function is as follows. Sliding clamp subunit that acts as a moving platform for DNA processing. Responsible for tethering the catalytic subunit of DNA polymerase and other proteins to DNA during high-speed replication. The sequence is that of DNA polymerase sliding clamp from Methanococcus maripaludis (strain C6 / ATCC BAA-1332).